The chain runs to 56 residues: Large ribosomal subunit protein bL32 (56 aa).

The protein belongs to the bacterial ribosomal protein bL32 family.

The chain is Large ribosomal subunit protein bL32 from Prochlorococcus marinus (strain MIT 9301).